Reading from the N-terminus, the 122-residue chain is Putative iron-sulfur cluster insertion protein ErpA (122 aa).

Iron-sulfur cluster contacts are provided by Cys-50, Cys-114, and Cys-116.

Belongs to the HesB/IscA family. As to quaternary structure, homodimer. It depends on iron-sulfur cluster as a cofactor.

Required for insertion of 4Fe-4S clusters. This Burkholderia mallei (strain NCTC 10247) protein is Putative iron-sulfur cluster insertion protein ErpA.